A 1047-amino-acid polypeptide reads, in one-letter code: MALPSLLLLVAALAGGVRPPGARNLTLAVVLPEHNLSYAWAWPRVGPAVALAVEALGRALPVDLRFVSSELEGACSEYLAPLSAVDLKLYHDPDLLLGPGCVYPAASVARFASHWRLPLLTAGAVASGFSAKNDHYRTLVRTGPSAPKLGEFVVTLHGHFNWTARAALLYLDARTDDRPHYFTIEGVFEALQGSNLSVQHQVYAREPGGPEQATHFIRANGRIVYICGPLEMLHEILLQAQRENLTNGDYVFFYLDVFGESLRAGPTRATGRPWQDNRTREQAQALREAFQTVLVITYREPPNPEYQEFQNRLLIRAREDFGVELGPSLMNLIAGCFYDGILLYAEVLNETIQEGGTREDGLRIVEKMQGRRYHGVTGLVVMDKNNDRETDFVLWAMGDLDSGDFQPAAHYSGAEKQIWWTGRPIPWVKGAPPSDNPPCAFDLDDPSCDKTPLSTLAIVALGTGITFIMFGVSSFLIFRKLMLEKELASMLWRIRWEELQFGNSERYHKGAGSRLTLSLRGSSYGSLMTAHGKYQIFANTGHFKGNVVAIKHVNKKRIELTRQVLFELKHMRDVQFNHLTRFIGACIDPPNICIVTEYCPRGSLQDILENDSINLDWMFRYSLINDLVKGMAFLHNSIISSHGSLKSSNCVVDSRFVLKITDYGLASFRSTAEPDDSHALYAKKLWTAPELLSGNPLPTTGMQKADVYSFGIILQEIALRSGPFYLEGLDLSPKEIVQKVRNGQRPYFRPSIDRTQLNEELVLLMERCWAQDPAERPDFGQIKGFIRRFNKEGGTSILDNLLLRMEQYANNLEKLVEERTQAYLEEKRKAEALLYQILPHSVAEQLKRGETVQAEAFDSVTIYFSDIVGFTALSAESTPMQVVTLLNDLYTCFDAIIDNFDVYKVETIGDAYMVVSGLPGRNGQRHAPEIARMALALLDAVSSFRIRHRPHDQLRLRIGVHTGPVCAGVVGLKMPRYCLFGDTVNTASRMESNGQALKIHVSSTTKDALDELGCFQLELRGDVEMKGKGKMRTYWLLGERKGPPGLL.

The first 22 residues, 1–22, serve as a signal peptide directing secretion; it reads MALPSLLLLVAALAGGVRPPGA. Residues 23–458 lie on the Extracellular side of the membrane; it reads RNLTLAVVLP…DKTPLSTLAI (436 aa). 2 N-linked (GlcNAc...) asparagine glycosylation sites follow: Asn-24 and Asn-35. Cys-75 and Cys-101 are joined by a disulfide. Asn-161, Asn-195, Asn-244, Asn-277, and Asn-349 each carry an N-linked (GlcNAc...) asparagine glycan. The chain crosses the membrane as a helical span at residues 459–478; the sequence is VALGTGITFIMFGVSSFLIF. The Cytoplasmic segment spans residues 479–1047; sequence RKLMLEKELA…GERKGPPGLL (569 aa). A Phosphoserine modification is found at Ser-513. Residues 513–786 enclose the Protein kinase domain; it reads SRLTLSLRGS…PDFGQIKGFI (274 aa). A Phosphothreonine modification is found at Thr-516. Ser-518, Ser-522, Ser-523, and Ser-526 each carry phosphoserine. Thr-529 carries the post-translational modification Phosphothreonine. Positions 861 to 991 constitute a Guanylate cyclase domain; it reads TIYFSDIVGF…DTVNTASRME (131 aa).

The protein belongs to the adenylyl cyclase class-4/guanylyl cyclase family. Phosphorylated. Phosphorylation of the protein kinase-like domain is required for full activation by CNP. Post-translationally, glycosylated.

The protein resides in the cell membrane. The enzyme catalyses GTP = 3',5'-cyclic GMP + diphosphate. Its function is as follows. Receptor for the C-type natriuretic peptide NPPC/CNP hormone. Has guanylate cyclase activity upon binding of its ligand. May play a role in the regulation of skeletal growth. The polypeptide is Atrial natriuretic peptide receptor 2 (NPR2) (Homo sapiens (Human)).